The primary structure comprises 182 residues: Ribosome-recycling factor (182 aa).

The interval 136–160 (VKKSEKDGDLSEDQSRDEQEKIQKE) is disordered.

This sequence belongs to the RRF family.

The protein resides in the cytoplasm. Its function is as follows. Responsible for the release of ribosomes from messenger RNA at the termination of protein biosynthesis. May increase the efficiency of translation by recycling ribosomes from one round of translation to another. This chain is Ribosome-recycling factor, found in Prochlorococcus marinus (strain NATL1A).